Consider the following 332-residue polypeptide: Aquaporin-7-2 (332 aa).

The segment covering 1 to 40 (MSGQHQITEQPSGNPLSRTSTLIQEKPLTPTSSHAGTQKQ) has biased composition (polar residues). Residues 1–46 (MSGQHQITEQPSGNPLSRTSTLIQEKPLTPTSSHAGTQKQPEAPRQ) form a disordered region. Topologically, residues 1 to 66 (MSGQHQITEQ…RHAIRKPMAE (66 aa)) are cytoplasmic. The helical transmembrane segment at 67 to 87 (FFGVALLIIFGAGSACQVVLS) threads the bilayer. At 88 to 100 (TNPDVASSARGSF) the chain is on the extracellular side. A helical membrane pass occupies residues 101 to 121 (LSINFGWAIGIAMGVWVSGGI). Over 122 to 144 (SGGHINPAITIAMATYRGFPWCK) the chain is Cytoplasmic. The NPA 1 motif lies at 127-129 (NPA). A helical membrane pass occupies residues 145–165 (VPSYILAQVLGGVVGAALVYA). Topologically, residues 166–199 (NYIHAIDVFEGGHHIRTEATASLFATYALPYMTQ) are extracellular. A helical transmembrane segment spans residues 200–220 (ASCFFSEFLATAVLSMMVFAL). The Cytoplasmic segment spans residues 221 to 230 (TDKRNHSPTN). A helical transmembrane segment spans residues 231 to 251 (GLLPFALFILFVGLGASLGME). The Extracellular segment spans residues 252–283 (TAYALNPARDFGPRLFLAMAGYGKALFNYRSQ). The NPA 2 motif lies at 257-259 (NPA). A helical transmembrane segment spans residues 284–304 (YWLWAPIIAPVLGAQAGGLLY). The Cytoplasmic portion of the chain corresponds to 305–332 (DTFLNDGDNSPIKWRCASSQEQQLAEVV).

Belongs to the MIP/aquaporin (TC 1.A.8) family.

It is found in the membrane. It catalyses the reaction H2O(in) = H2O(out). Water channel required to facilitate the transport of water across membranes. Does not mediate the transport carbon dioxide across the membrane. This Laccaria bicolor (Bicoloured deceiver) protein is Aquaporin-7-2.